A 181-amino-acid polypeptide reads, in one-letter code: Adenine phosphoribosyltransferase (181 aa).

The protein belongs to the purine/pyrimidine phosphoribosyltransferase family. As to quaternary structure, homodimer.

It localises to the cytoplasm. The enzyme catalyses AMP + diphosphate = 5-phospho-alpha-D-ribose 1-diphosphate + adenine. It functions in the pathway purine metabolism; AMP biosynthesis via salvage pathway; AMP from adenine: step 1/1. Functionally, catalyzes a salvage reaction resulting in the formation of AMP, that is energically less costly than de novo synthesis. The protein is Adenine phosphoribosyltransferase of Methylorubrum extorquens (strain CM4 / NCIMB 13688) (Methylobacterium extorquens).